A 377-amino-acid polypeptide reads, in one-letter code: Probable dehydratase NIT22 (377 aa).

Positions 101 and 196 each coordinate NADP(+). The interval 220–243 (ERGPKMNEHVPSTPPRRPDAVSSF) is disordered. Positions 233 to 332 (PPRRPDAVSS…ILMWDMGLCK (100 aa)) constitute a MaoC-like domain. The NADP(+) site is built by Thr-265 and Ile-287.

Belongs to the short-chain dehydrogenases/reductases (SDR) family.

Its pathway is siderophore biosynthesis. Its function is as follows. Probable dehydratase; part of the gene cluster that mediates the biosynthesis of hydroxamate-containing siderophores that play a critical role in virulence via intracellular iron acquisition during macrophage infection. The polypeptide is Probable dehydratase NIT22 (Ajellomyces capsulatus (Darling's disease fungus)).